We begin with the raw amino-acid sequence, 172 residues long: Shikimate kinase (172 aa).

Glycine 11–threonine 16 contacts ATP. Residue serine 15 coordinates Mg(2+). Aspartate 33, arginine 57, and glycine 79 together coordinate substrate. ATP is bound at residue arginine 117. Arginine 136 is a binding site for substrate. Arginine 153 is a binding site for ATP.

This sequence belongs to the shikimate kinase family. As to quaternary structure, monomer. Mg(2+) serves as cofactor.

It is found in the cytoplasm. It catalyses the reaction shikimate + ATP = 3-phosphoshikimate + ADP + H(+). Its pathway is metabolic intermediate biosynthesis; chorismate biosynthesis; chorismate from D-erythrose 4-phosphate and phosphoenolpyruvate: step 5/7. In terms of biological role, catalyzes the specific phosphorylation of the 3-hydroxyl group of shikimic acid using ATP as a cosubstrate. In Pseudomonas aeruginosa (strain LESB58), this protein is Shikimate kinase.